The primary structure comprises 139 residues: Putative nickel-responsive regulator (139 aa).

His-79, His-90, His-92, and Cys-98 together coordinate Ni(2+).

The protein belongs to the transcriptional regulatory CopG/NikR family. Requires Ni(2+) as cofactor.

Its function is as follows. Transcriptional regulator. This is Putative nickel-responsive regulator from Nitratidesulfovibrio vulgaris (strain DSM 19637 / Miyazaki F) (Desulfovibrio vulgaris).